Here is a 715-residue protein sequence, read N- to C-terminus: Harpin secretion protein HrpI (715 aa).

Transmembrane regions (helical) follow at residues 23–43 (GAAIVMSIVFMMIIPLPTGLI), 45–65 (VLIALNICISSLLIVLAMYLP), 69–89 (AFSTFPSVLLLTTMFRLALSI), 115–135 (GNLAVGLVIFLILTVVNFLVI), 203–223 (AIAGLVIVFINMIGGFAIGVL), 241–261 (IGDGLIAQIPALLISLTAGMI), and 298–318 (MLGFALLPGMPTAVFVIISAI).

This sequence belongs to the FHIPEP (flagella/HR/invasion proteins export pore) family.

It is found in the cell inner membrane. Functionally, involved in the secretion of harpin; a proteinaceous elicitor of the hypersensitivity response in plants. This chain is Harpin secretion protein HrpI (hrpI), found in Erwinia amylovora (Fire blight bacteria).